The chain runs to 57 residues: Small ribosomal subunit protein eS27 (57 aa).

4 residues coordinate Zn(2+): Cys-10, Cys-13, Cys-29, and Cys-32. The C4-type zinc-finger motif lies at 10-32 (CDDCENEQVLFGKAANTVNCAVC).

The protein belongs to the eukaryotic ribosomal protein eS27 family. As to quaternary structure, part of the 30S ribosomal subunit. It depends on Zn(2+) as a cofactor.

The polypeptide is Small ribosomal subunit protein eS27 (Natronomonas pharaonis (strain ATCC 35678 / DSM 2160 / CIP 103997 / JCM 8858 / NBRC 14720 / NCIMB 2260 / Gabara) (Halobacterium pharaonis)).